The sequence spans 410 residues: Probable 2,3-bisphosphoglycerate-independent phosphoglycerate mutase (410 aa).

Belongs to the BPG-independent phosphoglycerate mutase family. A-PGAM subfamily.

It catalyses the reaction (2R)-2-phosphoglycerate = (2R)-3-phosphoglycerate. It participates in carbohydrate degradation; glycolysis; pyruvate from D-glyceraldehyde 3-phosphate: step 3/5. Catalyzes the interconversion of 2-phosphoglycerate and 3-phosphoglycerate. In Deinococcus radiodurans (strain ATCC 13939 / DSM 20539 / JCM 16871 / CCUG 27074 / LMG 4051 / NBRC 15346 / NCIMB 9279 / VKM B-1422 / R1), this protein is Probable 2,3-bisphosphoglycerate-independent phosphoglycerate mutase.